Consider the following 132-residue polypeptide: Small ribosomal subunit protein uS8 (132 aa).

The protein belongs to the universal ribosomal protein uS8 family. As to quaternary structure, part of the 30S ribosomal subunit. Contacts proteins S5 and S12.

Its function is as follows. One of the primary rRNA binding proteins, it binds directly to 16S rRNA central domain where it helps coordinate assembly of the platform of the 30S subunit. The polypeptide is Small ribosomal subunit protein uS8 (Xylella fastidiosa (strain 9a5c)).